Reading from the N-terminus, the 434-residue chain is Beta-enolase (434 aa).

Residue Ala2 is modified to N-acetylalanine. Residue Thr72 is modified to Phosphothreonine. Ser83 and Ser157 each carry phosphoserine. Substrate contacts are provided by His158 and Glu167. At Ser176 the chain carries Phosphoserine. Thr205 carries the phosphothreonine modification. Glu210 functions as the Proton donor in the catalytic mechanism. A Phosphothreonine modification is found at Thr229. Tyr236 carries the phosphotyrosine modification. A Mg(2+)-binding site is contributed by Asp245. Ser263 carries the post-translational modification Phosphoserine. Glu293 and Asp318 together coordinate substrate. Mg(2+) is bound by residues Glu293 and Asp318. The active-site Proton acceptor is the Lys343. Substrate-binding positions include 370 to 373 (SHRS) and Lys394.

It belongs to the enolase family. Mammalian enolase is composed of 3 isozyme subunits, alpha, beta and gamma, which can form homodimers or heterodimers which are cell-type and development-specific. Interacts with PNKD. It depends on Mg(2+) as a cofactor. In terms of tissue distribution, the alpha/alpha homodimer is expressed in embryo and in most adult tissues. The alpha/beta heterodimer and the beta/beta homodimer are found in striated muscle, and the alpha/gamma heterodimer and the gamma/gamma homodimer in neurons.

Its subcellular location is the cytoplasm. It catalyses the reaction (2R)-2-phosphoglycerate = phosphoenolpyruvate + H2O. The protein operates within carbohydrate degradation; glycolysis; pyruvate from D-glyceraldehyde 3-phosphate: step 4/5. Glycolytic enzyme that catalyzes the conversion of 2-phosphoglycerate to phosphoenolpyruvate. Appears to have a function in striated muscle development and regeneration. The protein is Beta-enolase (Eno3) of Rattus norvegicus (Rat).